Consider the following 435-residue polypeptide: NADH-quinone oxidoreductase subunit D (435 aa).

The protein belongs to the complex I 49 kDa subunit family. NDH-1 is composed of 14 different subunits. Subunits NuoB, C, D, E, F, and G constitute the peripheral sector of the complex.

Its subcellular location is the cell inner membrane. It catalyses the reaction a quinone + NADH + 5 H(+)(in) = a quinol + NAD(+) + 4 H(+)(out). Functionally, NDH-1 shuttles electrons from NADH, via FMN and iron-sulfur (Fe-S) centers, to quinones in the respiratory chain. The immediate electron acceptor for the enzyme in this species is believed to be ubiquinone. Couples the redox reaction to proton translocation (for every two electrons transferred, four hydrogen ions are translocated across the cytoplasmic membrane), and thus conserves the redox energy in a proton gradient. This Xanthomonas euvesicatoria pv. vesicatoria (strain 85-10) (Xanthomonas campestris pv. vesicatoria) protein is NADH-quinone oxidoreductase subunit D.